We begin with the raw amino-acid sequence, 103 residues long: uncharacterized protein (103 aa).

Low complexity predominate over residues 38 to 51 (TTTTSSTTSASTTS). Positions 38-70 (TTTTSSTTSASTTSQPSFSLPTSCNSNSPQSNL) are disordered. The span at 52–70 (QPSFSLPTSCNSNSPQSNL) shows a compositional bias: polar residues.

This is an uncharacterized protein from Dictyostelium discoideum (Social amoeba).